A 317-amino-acid polypeptide reads, in one-letter code: Transaldolase (317 aa).

Lys-132 (schiff-base intermediate with substrate) is an active-site residue.

The protein belongs to the transaldolase family. Type 1 subfamily. As to quaternary structure, homodimer.

The protein localises to the cytoplasm. It carries out the reaction D-sedoheptulose 7-phosphate + D-glyceraldehyde 3-phosphate = D-erythrose 4-phosphate + beta-D-fructose 6-phosphate. The protein operates within carbohydrate degradation; pentose phosphate pathway; D-glyceraldehyde 3-phosphate and beta-D-fructose 6-phosphate from D-ribose 5-phosphate and D-xylulose 5-phosphate (non-oxidative stage): step 2/3. Transaldolase is important for the balance of metabolites in the pentose-phosphate pathway. This chain is Transaldolase, found in Actinobacillus succinogenes (strain ATCC 55618 / DSM 22257 / CCUG 43843 / 130Z).